The primary structure comprises 137 residues: Small ribosomal subunit protein uS11 (137 aa).

Residues 1 to 30 (MAQAKKGGAPKKGQKTRRREKKNVPHGAAH) form a disordered region. Positions 8-21 (GAPKKGQKTRRREK) are enriched in basic residues.

It belongs to the universal ribosomal protein uS11 family. As to quaternary structure, part of the 30S ribosomal subunit. Interacts with proteins S7 and S18. Binds to IF-3.

In terms of biological role, located on the platform of the 30S subunit, it bridges several disparate RNA helices of the 16S rRNA. Forms part of the Shine-Dalgarno cleft in the 70S ribosome. This chain is Small ribosomal subunit protein uS11, found in Mycolicibacterium vanbaalenii (strain DSM 7251 / JCM 13017 / BCRC 16820 / KCTC 9966 / NRRL B-24157 / PYR-1) (Mycobacterium vanbaalenii).